The chain runs to 99 residues: uncharacterized protein (99 aa).

Disordered regions lie at residues Met-1–Thr-24 and Ser-49–Thr-99. Basic residues-rich tracts occupy residues Val-15–Thr-24 and Ser-71–Arg-81.

This is an uncharacterized protein from Streptomyces fradiae (Streptomyces roseoflavus).